The following is a 1037-amino-acid chain: Tyrosine-protein kinase-like otk (1037 aa).

An N-terminal signal peptide occupies residues 1 to 23 (MDMDVMMISMCILASTFMAPGWA). 5 Ig-like C2-type domains span residues 24–109 (STSG…REAS), 110–199 (PPAK…RVMS), 251–365 (PEDL…APLN), 368–464 (PGLL…VSIN), and 469–559 (PKFS…VQLV). At 24–582 (STSGFLRVPQ…GGDGFLVTRA (559 aa)) the chain is on the extracellular side. Cystine bridges form between Cys47–Cys96, Cys138–Cys188, Cys276–Cys354, Cys399–Cys448, and Cys491–Cys543. N-linked (GlcNAc...) asparagine glycans are attached at residues Asn336, Asn418, Asn430, Asn445, Asn513, and Asn525. A helical membrane pass occupies residues 583 to 603 (VLITMTVALAYIVLVVGLMLW). Residues 604–1037 (CRYRRQARKA…SKAMQSVAEK (434 aa)) lie on the Cytoplasmic side of the membrane. Disordered stretches follow at residues 623–683 (AGGD…KSVY) and 720–777 (SAQS…KEEE). A compositionally biased stretch (polar residues) spans 658 to 676 (KSNGDAQKSDDTACSQQSR). Phosphoserine is present on Ser681. In terms of domain architecture, Protein kinase; inactive spans 693–1031 (LSELLQIGRG…QLGSALSKAM (339 aa)). Over residues 723–734 (SDKDADTEKQHS) the composition is skewed to basic and acidic residues. The segment covering 739–749 (GSGGSGSGSGS) has biased composition (gly residues). Acidic residues predominate over residues 768–777 (DDIEEIKEEE).

It belongs to the protein kinase superfamily. Tyr protein kinase family. Insulin receptor subfamily. As to quaternary structure, interacts with plexA; component of a receptor complex that mediates the repulsive signaling in response to Semaphorin ligands.

It localises to the cell membrane. In terms of biological role, acts as a calcium-dependent, homophilic cell adhesion molecule that regulates neural recognition during the development of the nervous system. Component of the repulsive Plexin signaling response to regulate motor axon guidance at the embryonic stage. Also component of a receptor complex that is required in the adult visual system to innervate the lamina layer; specific targeting of R1-R6 axons. The protein is Tyrosine-protein kinase-like otk of Drosophila pseudoobscura pseudoobscura (Fruit fly).